The chain runs to 1161 residues: Lateral signaling target protein 2 homolog (1161 aa).

Disordered regions lie at residues 417 to 510 (ATGS…EVDD), 583 to 831 (AAGS…PTQS), 890 to 918 (MNSSPPEPDEPPEPSGSEEESKDSQHNHP), 935 to 978 (DQQN…SVES), 992 to 1014 (SSPVGAGGAGGGGMVGGSRTGQE), and 1029 to 1095 (GKAS…EPPR). Over residues 419–429 (GSSGFGSGRGG) the composition is skewed to gly residues. Positions 438–453 (PKQRHNQAHLRQRGAP) are enriched in basic residues. The span at 468 to 487 (GDDREPVVEEDNNNHLRKEI) shows a compositional bias: basic and acidic residues. Residues 488–510 (EEEDVDDDMEEEEEDEEEDEVDD) are compositionally biased toward acidic residues. Residues 583-601 (AAGSGGQQQQQQQQQLIDS) are compositionally biased toward low complexity. Acidic residues predominate over residues 669 to 704 (SDYEEADVDDEPDDVDADDDDEEEDDVVGEVEEQND). Basic residues predominate over residues 728-742 (KAARNHRKSSHHRPR). Low complexity predominate over residues 743–757 (PSTSSSSSSAAYRNK). Residues 758 to 773 (SQSHQHHHHHHHHHHH) show a composition bias toward basic residues. Low complexity-rich tracts occupy residues 781 to 800 (GTSSVVSTITTSNNSTSNGS) and 807 to 831 (MQQQHQQHQQQRNSSSSCDTSPTQS). Positions 896–910 (EPDEPPEPSGSEEES) are enriched in acidic residues. Composition is skewed to polar residues over residues 935–948 (DQQNHSGGSSQSIY) and 956–967 (EQDSVFGSSGDS). Residues 996–1010 (GAGGAGGGGMVGGSR) show a composition bias toward gly residues. Low complexity predominate over residues 1054–1065 (SRSSPSSPVNSN). Residues 1081–1094 (TAHEQQRRMPEEPP) show a composition bias toward basic and acidic residues. Residues 1099–1159 (DCDAPRCMAC…VCRDCYIHEV (61 aa)) form an FYVE-type zinc finger. Positions 1105, 1108, 1121, 1124, 1129, 1132, 1151, and 1154 each coordinate Zn(2+).

It belongs to the lst-2 family.

Functionally, negative regulator of epidermal growth factor receptor (EGFR) signaling. The polypeptide is Lateral signaling target protein 2 homolog (Anopheles gambiae (African malaria mosquito)).